The chain runs to 333 residues: Biotin synthase (333 aa).

One can recognise a Radical SAM core domain in the interval 40-269 (YRVQLASLLS…HARVRLSAGR (230 aa)). 3 residues coordinate [4Fe-4S] cluster: Cys55, Cys59, and Cys62. [2Fe-2S] cluster-binding residues include Cys100, Cys132, Cys192, and Arg264.

The protein belongs to the radical SAM superfamily. Biotin synthase family. As to quaternary structure, homodimer. The cofactor is [4Fe-4S] cluster. It depends on [2Fe-2S] cluster as a cofactor.

The enzyme catalyses (4R,5S)-dethiobiotin + (sulfur carrier)-SH + 2 reduced [2Fe-2S]-[ferredoxin] + 2 S-adenosyl-L-methionine = (sulfur carrier)-H + biotin + 2 5'-deoxyadenosine + 2 L-methionine + 2 oxidized [2Fe-2S]-[ferredoxin]. The protein operates within cofactor biosynthesis; biotin biosynthesis; biotin from 7,8-diaminononanoate: step 2/2. Its function is as follows. Catalyzes the conversion of dethiobiotin (DTB) to biotin by the insertion of a sulfur atom into dethiobiotin via a radical-based mechanism. In Synechococcus sp. (strain CC9902), this protein is Biotin synthase.